Reading from the N-terminus, the 655-residue chain is Kelch-like protein 13 (655 aa).

In terms of domain architecture, BTB spans 92–161 (CDVTLMPGDT…IYTAKLSLNM (70 aa)). Residues 196 to 297 (CVEVGRIANT…TPQELINYVQ (102 aa)) enclose the BACK domain. 6 Kelch repeats span residues 341–389 (HLVT…VIGN), 390–441 (FLYV…ALKG), 442–488 (YLYA…VYGG), 490–535 (MYIS…TVGE), 537–587 (LYVI…VFEN), and 588–636 (KIYV…TLTV).

Component of the BCR(KLHL9-KLHL13) E3 ubiquitin ligase complex, at least composed of CUL3, KLHL9, KLHL13 and RBX1. Interacts with AURKB.

Its pathway is protein modification; protein ubiquitination. Substrate-specific adapter of a BCR (BTB-CUL3-RBX1) E3 ubiquitin-protein ligase complex required for mitotic progression and cytokinesis. The BCR(KLHL9-KLHL13) E3 ubiquitin ligase complex mediates the ubiquitination of AURKB and controls the dynamic behavior of AURKB on mitotic chromosomes and thereby coordinates faithful mitotic progression and completion of cytokinesis. This Homo sapiens (Human) protein is Kelch-like protein 13 (KLHL13).